Consider the following 206-residue polypeptide: Protein FAM228A (206 aa).

Belongs to the FAM228 family.

This is Protein FAM228A (FAM228A) from Homo sapiens (Human).